The following is a 590-amino-acid chain: Multidrug resistance-like ATP-binding protein MdlA (590 aa).

Positions 18–303 constitute an ABC transmembrane type-1 domain; that stretch reads YLGAVALLVI…LAWMFNIVER (286 aa). The next 6 helical transmembrane spans lie at 23–43, 53–73, 134–154, 155–175, 248–268, and 280–300; these read ALLV…GIVV, TGQI…VYLL, GVLT…MMST, QISW…AIMI, IYIA…WMVV, and FMMY…MFNI. The ABC transporter domain occupies 337-570; the sequence is VNIHQFTYPQ…SGWYRDMYRY (234 aa). 369 to 376 is an ATP binding site; it reads GPTGSGKS.

It belongs to the ABC transporter superfamily. Drug exporter-2 (TC 3.A.1.117) family.

It localises to the cell inner membrane. It carries out the reaction ATP + H2O + xenobioticSide 1 = ADP + phosphate + xenobioticSide 2.. This Escherichia coli (strain K12) protein is Multidrug resistance-like ATP-binding protein MdlA (mdlA).